We begin with the raw amino-acid sequence, 315 residues long: Replication factor C small subunit (315 aa).

Position 43-50 (Gly43–Thr50) interacts with ATP.

Belongs to the activator 1 small subunits family. RfcS subfamily. In terms of assembly, heteromultimer composed of small subunits (RfcS) and large subunits (RfcL).

Part of the RFC clamp loader complex which loads the PCNA sliding clamp onto DNA. In Methanococcus vannielii (strain ATCC 35089 / DSM 1224 / JCM 13029 / OCM 148 / SB), this protein is Replication factor C small subunit.